We begin with the raw amino-acid sequence, 238 residues long: Pyridoxine 5'-phosphate synthase (238 aa).

Asparagine 6 serves as a coordination point for 3-amino-2-oxopropyl phosphate. 8-9 (DH) is a 1-deoxy-D-xylulose 5-phosphate binding site. Arginine 17 lines the 3-amino-2-oxopropyl phosphate pocket. The active-site Proton acceptor is the histidine 42. Residues arginine 44 and histidine 49 each coordinate 1-deoxy-D-xylulose 5-phosphate. The Proton acceptor role is filled by glutamate 69. Threonine 99 lines the 1-deoxy-D-xylulose 5-phosphate pocket. Catalysis depends on histidine 186, which acts as the Proton donor. Residues glycine 187 and 208 to 209 (GH) contribute to the 3-amino-2-oxopropyl phosphate site.

It belongs to the PNP synthase family. As to quaternary structure, homooctamer; tetramer of dimers.

It localises to the cytoplasm. It catalyses the reaction 3-amino-2-oxopropyl phosphate + 1-deoxy-D-xylulose 5-phosphate = pyridoxine 5'-phosphate + phosphate + 2 H2O + H(+). It participates in cofactor biosynthesis; pyridoxine 5'-phosphate biosynthesis; pyridoxine 5'-phosphate from D-erythrose 4-phosphate: step 5/5. Its function is as follows. Catalyzes the complicated ring closure reaction between the two acyclic compounds 1-deoxy-D-xylulose-5-phosphate (DXP) and 3-amino-2-oxopropyl phosphate (1-amino-acetone-3-phosphate or AAP) to form pyridoxine 5'-phosphate (PNP) and inorganic phosphate. This is Pyridoxine 5'-phosphate synthase from Anaplasma marginale (strain St. Maries).